Consider the following 1138-residue polypeptide: Trafficking protein particle complex subunit 9 (1138 aa).

Phosphoserine occurs at positions 557 and 944.

Belongs to the NIBP family. In terms of assembly, component of the multisubunit TRAPP (transport protein particle) complex, which includes at least TRAPPC2, TRAPPC2L, TRAPPC3, TRAPPC3L, TRAPPC4, TRAPPC5, TRAPPC8, TRAPPC9, TRAPPC10, TRAPPC11 and TRAPPC12. Directly interacts with IKBKB and MAP3K14.

It localises to the golgi apparatus. It is found in the cis-Golgi network. The protein resides in the endoplasmic reticulum. The protein localises to the cytoplasm. Its function is as follows. Functions as an activator of NF-kappa-B through increased phosphorylation of the IKK complex. May function in neuronal cells differentiation. May play a role in vesicular transport from endoplasmic reticulum to Golgi. The polypeptide is Trafficking protein particle complex subunit 9 (TRAPPC9) (Bos taurus (Bovine)).